A 360-amino-acid chain; its full sequence is Phenylalanine--tRNA ligase alpha subunit (360 aa).

Position 260 (E260) interacts with Mg(2+).

It belongs to the class-II aminoacyl-tRNA synthetase family. Phe-tRNA synthetase alpha subunit type 1 subfamily. In terms of assembly, tetramer of two alpha and two beta subunits. Mg(2+) serves as cofactor.

Its subcellular location is the cytoplasm. The catalysed reaction is tRNA(Phe) + L-phenylalanine + ATP = L-phenylalanyl-tRNA(Phe) + AMP + diphosphate + H(+). The sequence is that of Phenylalanine--tRNA ligase alpha subunit from Sinorhizobium fredii (strain NBRC 101917 / NGR234).